The following is a 3589-amino-acid chain: D-lysergyl-peptide-synthetase subunit 1 (3589 aa).

Positions 344–742 are adenylation (A) domain 1; sequence NCHSRPDSLA…IGRKDLQVKV (399 aa). A Carrier 1 domain is found at 883 to 952; that stretch reads VERRLQLLFA…KLRDLAAASS (70 aa). Serine 915 carries the O-(pantetheine 4'-phosphoryl)serine modification. The condensation (C) domain 1 stretch occupies residues 995-1380; that stretch reads EDIYPCTSLQ…SQFQHILTQI (386 aa). Residues 1424 to 1826 form an adenylation (A) domain 2 region; that stretch reads QAKAQMQPEA…RRKDSQVKLR (403 aa). One can recognise a Carrier 2 domain in the interval 1974 to 2042; the sequence is LERELQKIWA…TIEKLAAAAV (69 aa). Serine 2006 bears the O-(pantetheine 4'-phosphoryl)serine mark. The segment at 2087–2509 is condensation (C) domain 2; the sequence is VEDIYPCSPI…IEMLDEEHRS (423 aa). The interval 2534–2929 is adenylation (A) domain 3; it reads CLESPESPAI…GRKDDQVKIR (396 aa). In terms of domain architecture, Carrier 3 spans 3064 to 3132; the sequence is LETRLQELVG…RLSELAVVLN (69 aa). Serine 3096 carries the O-(pantetheine 4'-phosphoryl)serine modification. Residues 3187–3585 are cyclization (Cyc) domain; the sequence is TNFIALHFSQ…TYPESLVSEL (399 aa).

It belongs to the NRP synthetase family.

The protein operates within alkaloid biosynthesis; ergot alkaloid biosynthesis. Its function is as follows. D-lysergyl-peptide-synthetase subunit 1; part of the gene cluster that mediates the biosynthesis of fungal ergot alkaloid ergovaline, the predominant ergopeptine product in E.festucae var. lolii. DmaW catalyzes the first step of ergot alkaloid biosynthesis by condensing dimethylallyl diphosphate (DMAP) and tryptophan to form 4-dimethylallyl-L-tryptophan. The second step is catalyzed by the methyltransferase easF that methylates 4-dimethylallyl-L-tryptophan in the presence of S-adenosyl-L-methionine, resulting in the formation of 4-dimethylallyl-L-abrine. The catalase easC and the FAD-dependent oxidoreductase easE then transform 4-dimethylallyl-L-abrine to chanoclavine-I which is further oxidized by easD in the presence of NAD(+), resulting in the formation of chanoclavine-I aldehyde. Agroclavine dehydrogenase easG then mediates the conversion of chanoclavine-I aldehyde to agroclavine via a non-enzymatic adduct reaction: the substrate is an iminium intermediate that is formed spontaneously from chanoclavine-I aldehyde in the presence of glutathione. The presence of easA is not required to complete this reaction. Further conversion of agroclavine to paspalic acid is a two-step process involving oxidation of agroclavine to elymoclavine and of elymoclavine to paspalic acid, the second step being performed by the elymoclavine oxidase cloA. Paspalic acid is then further converted to D-lysergic acid. Ergovaline is assembled from D-lysergic acid and three different amino acids by the D-lysergyl-peptide-synthetase composed of a monomudular (lpsB) and a trimodular (lpsA) nonribosomal peptide synthetase subunit. This Epichloe festucae var. lolii (Neotyphodium lolii) protein is D-lysergyl-peptide-synthetase subunit 1.